The sequence spans 647 residues: Threonine--tRNA ligase (647 aa).

Residues 1–61 (MIKITFPDGA…EEDGSIEIVT (61 aa)) enclose the TGS domain. Residues 240–538 (DHRKLGKELD…LIETYKGAFP (299 aa)) are catalytic. Positions 334, 385, and 515 each coordinate Zn(2+).

Belongs to the class-II aminoacyl-tRNA synthetase family. Homodimer. Zn(2+) serves as cofactor.

Its subcellular location is the cytoplasm. The enzyme catalyses tRNA(Thr) + L-threonine + ATP = L-threonyl-tRNA(Thr) + AMP + diphosphate + H(+). Functionally, catalyzes the attachment of threonine to tRNA(Thr) in a two-step reaction: L-threonine is first activated by ATP to form Thr-AMP and then transferred to the acceptor end of tRNA(Thr). Also edits incorrectly charged L-seryl-tRNA(Thr). The chain is Threonine--tRNA ligase from Streptococcus pyogenes serotype M2 (strain MGAS10270).